Reading from the N-terminus, the 153-residue chain is MADWFSSPLKTCTHVCDFPSLAGDPQQEIMCCDSMKNKLQDSRKVLLVSCSVSFNGSFYGGNRNVRGQLQISMVEDDGVCRPIGYVPIGGYLYHNDYGYYEGTRTFNLDLESQYLKKDEDYNRKFLVSILNENGLDSQCDLKVFIVHSIRIKV.

Belongs to the nanoviridae nuclear shuttle protein family.

It is found in the host nucleus. The protein localises to the host cytoplasm. Putative nuclear shuttle protein. The chain is Putative nuclear shuttle protein (DNA-N) from Faba bean necrotic yellows virus (isolate Syrian SV292-88) (FBNYV).